We begin with the raw amino-acid sequence, 59 residues long: Ribosome modulation factor (59 aa).

This sequence belongs to the ribosome modulation factor family.

Its subcellular location is the cytoplasm. During stationary phase, converts 70S ribosomes to an inactive dimeric form (100S ribosomes). This is Ribosome modulation factor from Aeromonas veronii (strain B565).